A 1207-amino-acid chain; its full sequence is DNA-directed RNA polymerase subunit beta' (1207 aa).

Cys-60, Cys-62, Cys-75, and Cys-78 together coordinate Zn(2+). Positions 450, 452, and 454 each coordinate Mg(2+). Zn(2+)-binding residues include Cys-818, Cys-892, Cys-899, and Cys-902.

Belongs to the RNA polymerase beta' chain family. In terms of assembly, the RNAP catalytic core consists of 2 alpha, 1 beta, 1 beta' and 1 omega subunit. When a sigma factor is associated with the core the holoenzyme is formed, which can initiate transcription. The cofactor is Mg(2+). Zn(2+) is required as a cofactor.

It carries out the reaction RNA(n) + a ribonucleoside 5'-triphosphate = RNA(n+1) + diphosphate. Its function is as follows. DNA-dependent RNA polymerase catalyzes the transcription of DNA into RNA using the four ribonucleoside triphosphates as substrates. The protein is DNA-directed RNA polymerase subunit beta' of Lactococcus lactis subsp. cremoris (strain SK11).